Here is a 561-residue protein sequence, read N- to C-terminus: Thymidine kinase (561 aa).

Polar residues-rich tracts occupy residues 1–14 and 112–122; these read MASN…TPRR and LSSSNTASGLR. 2 disordered regions span residues 1-22 and 34-122; these read MASN…VPKA and FLTQ…SGLR. 245 to 252 is a binding site for ATP; sequence GCMAAGKT. The active-site Proton acceptor is the Glu-272. Gln-310 provides a ligand contact to substrate. Position 400 (Arg-400) interacts with ATP. A substrate-binding site is contributed by Arg-406.

The protein belongs to the herpesviridae thymidine kinase family. In terms of assembly, homodimer.

The enzyme catalyses thymidine + ATP = dTMP + ADP + H(+). Its function is as follows. Catalyzes the transfer of the gamma-phospho group of ATP to thymidine to generate dTMP in the salvage pathway of pyrimidine synthesis. The dTMP serves as a substrate for DNA polymerase during viral DNA replication. Allows the virus to be reactivated and to grow in non-proliferative cells lacking a high concentration of phosphorylated nucleic acid precursors. This is Thymidine kinase from Connochaetes taurinus (Blue wildebeest).